Here is a 105-residue protein sequence, read N- to C-terminus: MSCIFFSELFPIFTFFKEKIGHYARVLARKLDRDLSLSIRNLLTLKRKNMNFLKFLNRSSPVDTRAIEMDYLSLSFFFFGGSSWSLTRITASTSSCTDSSPLGRP.

The protein resides in the mitochondrion. This is an uncharacterized protein from Paramecium tetraurelia.